Here is a 208-residue protein sequence, read N- to C-terminus: Octanoyltransferase (208 aa).

Residues 30–208 (GTASEAVFIL…ILKQEFYKIF (179 aa)) enclose the BPL/LPL catalytic domain. Substrate contacts are provided by residues 69–76 (RGGKFTYH), 142–144 (SIG), and 155–157 (GVA). C173 (acyl-thioester intermediate) is an active-site residue.

The protein belongs to the LipB family.

The protein localises to the cytoplasm. The catalysed reaction is octanoyl-[ACP] + L-lysyl-[protein] = N(6)-octanoyl-L-lysyl-[protein] + holo-[ACP] + H(+). The protein operates within protein modification; protein lipoylation via endogenous pathway; protein N(6)-(lipoyl)lysine from octanoyl-[acyl-carrier-protein]: step 1/2. Functionally, catalyzes the transfer of endogenously produced octanoic acid from octanoyl-acyl-carrier-protein onto the lipoyl domains of lipoate-dependent enzymes. Lipoyl-ACP can also act as a substrate although octanoyl-ACP is likely to be the physiological substrate. The chain is Octanoyltransferase from Orientia tsutsugamushi (strain Boryong) (Rickettsia tsutsugamushi).